The sequence spans 548 residues: Chaperonin GroEL (548 aa).

ATP-binding positions include 30–33, Lys51, 87–91, Gly415, 479–481, and Asp495; these read TLGP, DGTTT, and NAA.

This sequence belongs to the chaperonin (HSP60) family. Forms a cylinder of 14 subunits composed of two heptameric rings stacked back-to-back. Interacts with the co-chaperonin GroES.

The protein localises to the cytoplasm. It catalyses the reaction ATP + H2O + a folded polypeptide = ADP + phosphate + an unfolded polypeptide.. Functionally, together with its co-chaperonin GroES, plays an essential role in assisting protein folding. The GroEL-GroES system forms a nano-cage that allows encapsulation of the non-native substrate proteins and provides a physical environment optimized to promote and accelerate protein folding. This is Chaperonin GroEL from Pectobacterium carotovorum subsp. carotovorum (strain PC1).